The following is a 212-amino-acid chain: Methylthioribulose-1-phosphate dehydratase (212 aa).

The Zn(2+) site is built by histidine 97 and histidine 99.

Belongs to the aldolase class II family. MtnB subfamily. In terms of assembly, homotetramer. It depends on Zn(2+) as a cofactor.

It carries out the reaction 5-(methylsulfanyl)-D-ribulose 1-phosphate = 5-methylsulfanyl-2,3-dioxopentyl phosphate + H2O. The protein operates within amino-acid biosynthesis; L-methionine biosynthesis via salvage pathway; L-methionine from S-methyl-5-thio-alpha-D-ribose 1-phosphate: step 2/6. Catalyzes the dehydration of methylthioribulose-1-phosphate (MTRu-1-P) into 2,3-diketo-5-methylthiopentyl-1-phosphate (DK-MTP-1-P). This chain is Methylthioribulose-1-phosphate dehydratase, found in Bacillus mycoides (strain KBAB4) (Bacillus weihenstephanensis).